The primary structure comprises 161 residues: Extracellular giant hemoglobin major globin subunit B1 (161 aa).

An N-terminal signal peptide occupies residues 1–16 (MTILVLFLSCAALASA). In terms of domain architecture, Globin spans 18-161 (CCSRGDAEVV…YIAAGIGAGL (144 aa)). Cysteines 19 and 149 form a disulfide. His-112 contributes to the heme b binding site.

Belongs to the globin family. As to quaternary structure, the 400 kDa hemoglobin consists of a spherical 24-mer arranged as a double layer of dome-shaped dodecamers. Each dodecamer is composed of the 3-fold trimer of the tetramer A1-A2-B1-B2 having one intra-tetramer (A1-B2) disulfide bond and one inter-tetramer (B1-B2) disulfide bond per tetramer.

It localises to the secreted. The extracellular giant hemoglobin is able to bind and transport oxygen and sulfide simultaneously and reversibly at two different sites. The sequence is that of Extracellular giant hemoglobin major globin subunit B1 (ghbB1) from Oligobrachia mashikoi (Beard worm).